We begin with the raw amino-acid sequence, 412 residues long: Autophagy-related protein 34 (412 aa).

The tract at residues 246 to 348 is AMS1-binding; that stretch reads NDPLLHVEVS…SNEITLKSPL (103 aa).

Interacts with AMS1, ATG8 and ATG11.

Its subcellular location is the preautophagosomal structure membrane. In terms of biological role, cargo-receptor protein involved in the cytoplasm to vacuole transport (Cvt) and in autophagy. Recognizes cargo proteins, such as AMS1 and delivers them to the pre-autophagosomal structure for eventual engulfment by the autophagosome and targeting to the vacuole. The protein is Autophagy-related protein 34 (ATG34) of Saccharomyces cerevisiae (strain ATCC 204508 / S288c) (Baker's yeast).